Here is a 495-residue protein sequence, read N- to C-terminus: MAEKILFYIYRDSGTSSENLVRAIVDEFKNFVFRDRGIAFTSKGYSGIPLLGELPIDSPLDDIWKVVAVLFKISAREEGLIFKVHTTDYEKNPLVAEAKKSDVLPNWAHSVKDFAENVFGMNGVIHLISPTVSEKFPKRSQIDILRAVPNETRNILVTESLSEKLHSSESRNFGMHNTSVNVPVSMAYVARERPDILSLAIREFVKTDERKIKELEKRLANEHDRVMIHTIINDTDWKEVTAVADIESPTDIVSHRVSLALLAFDEKHSSIPNGVDVPVSGLFQKVGDRFEREHLEALRAKLFGSPQSATHLYQCAKSLVTGNHVQECRKIFVDEGSTSNRESDCSGNEDDSSNAKYAKKQVFKKKKRNAFGKKRELAAILDHTKPSEHSEPDYVAPDNSAALKKFERAVNGDDYYKASSDEYSLGEEEDLELFMAKPRKKILEEMKNKNKARLGIKVTERLPTVSDDEEIDVADMLRAAPPIANAEDIEDFDDI.

The interval 337 to 360 is disordered; the sequence is STSNRESDCSGNEDDSSNAKYAKK.

This is an uncharacterized protein from Caenorhabditis elegans.